The sequence spans 464 residues: Glutamate--tRNA ligase 1 (464 aa).

The short motif at 10-20 is the 'HIGH' region element; that stretch reads PSPTGYLHIGG. The short motif at 238 to 242 is the 'KMSKS' region element; that stretch reads KLSKR. ATP is bound at residue K241.

This sequence belongs to the class-I aminoacyl-tRNA synthetase family. Glutamate--tRNA ligase type 1 subfamily. Monomer.

It localises to the cytoplasm. It carries out the reaction tRNA(Glu) + L-glutamate + ATP = L-glutamyl-tRNA(Glu) + AMP + diphosphate. Functionally, catalyzes the attachment of glutamate to tRNA(Glu) in a two-step reaction: glutamate is first activated by ATP to form Glu-AMP and then transferred to the acceptor end of tRNA(Glu). This is Glutamate--tRNA ligase 1 from Helicobacter hepaticus (strain ATCC 51449 / 3B1).